The chain runs to 253 residues: uncharacterized protein (253 aa).

9 residues coordinate NADP(+): Ile-17, Ser-36, Asp-62, Asn-89, Lys-123, Tyr-158, Lys-162, Val-191, and Thr-193. Residue Tyr-158 is the Proton acceptor of the active site. The Lowers pKa of active site Tyr role is filled by Lys-162.

The protein belongs to the short-chain dehydrogenases/reductases (SDR) family.

It localises to the cytoplasm. The protein resides in the nucleus. This is an uncharacterized protein from Schizosaccharomyces pombe (strain 972 / ATCC 24843) (Fission yeast).